The sequence spans 92 residues: PqqA binding protein (92 aa).

This sequence belongs to the PqqD family. Monomer. Interacts with PqqE.

It participates in cofactor biosynthesis; pyrroloquinoline quinone biosynthesis. Functionally, functions as a PqqA binding protein and presents PqqA to PqqE, in the pyrroloquinoline quinone (PQQ) biosynthetic pathway. This is PqqA binding protein from Pseudomonas aeruginosa (strain UCBPP-PA14).